A 763-amino-acid chain; its full sequence is Phosphoglycerol transferase I (763 aa).

A run of 4 helical transmembrane segments spans residues 1–21 (MSEL…AWKA), 26–46 (WWFA…ITLF), 77–97 (ILPG…LGWI), and 108–128 (FGYS…SPAF).

Belongs to the OpgB family.

It is found in the cell inner membrane. The enzyme catalyses a phosphatidylglycerol + a membrane-derived-oligosaccharide D-glucose = a 1,2-diacyl-sn-glycerol + a membrane-derived-oligosaccharide 6-(glycerophospho)-D-glucose.. Its pathway is glycan metabolism; osmoregulated periplasmic glucan (OPG) biosynthesis. In terms of biological role, transfers a phosphoglycerol residue from phosphatidylglycerol to the membrane-bound nascent glucan backbones. The protein is Phosphoglycerol transferase I of Escherichia coli (strain UTI89 / UPEC).